The sequence spans 419 residues: Pregnancy-specific beta-1-glycoprotein 4 (419 aa).

The signal sequence occupies residues 1 to 34; sequence MGPLSAPPCTQRITWKGVLLTASLLNFWNPPTTA. In terms of domain architecture, Ig-like V-type spans 35 to 144; sequence QVTIEAQPPK…TGHFTFTLHL (110 aa). N-linked (GlcNAc...) asparagine glycosylation is found at asparagine 104, asparagine 111, asparagine 199, asparagine 268, asparagine 299, and asparagine 303. 3 Ig-like C2-type domains span residues 147–234, 237–327, and 332–410; these read PKPS…VTLN, PKLS…VTLN, and PDLP…KSIT. 3 disulfides stabilise this stretch: cysteine 169/cysteine 217, cysteine 262/cysteine 310, and cysteine 354/cysteine 394.

This sequence belongs to the immunoglobulin superfamily. CEA family.

The protein resides in the secreted. The polypeptide is Pregnancy-specific beta-1-glycoprotein 4 (PSG4) (Homo sapiens (Human)).